The following is a 158-amino-acid chain: Secreted RxLR effector protein 131 (158 aa).

A signal peptide spans M1–G20. The RxLR-dEER signature appears at R39–R57. A host BKI1-binding region spans residues K120–E158. A helical transmembrane segment spans residues A127 to I147. Residue N150 is glycosylated (N-linked (GlcNAc...) asparagine).

It belongs to the RxLR effector family. As to quaternary structure, interacts with host BKI1.

Its subcellular location is the secreted. It localises to the host cell membrane. Secreted effector that suppresses pathogen-associated molecular pattern (PAMP)-triggered immunity (PTI) in host plants. Suppresses both defense-related brassinosteroid (BR) and ERECTA (ER) signaling pathways in planta by interacting with host BRI1 kinase inhibitor 1 (BKI1) at the host plasma membrane, leading to a host dwarf phenotype. The chain is Secreted RxLR effector protein 131 from Plasmopara viticola (Downy mildew of grapevine).